The following is an 83-amino-acid chain: U25-theraphotoxin-Cg1a (83 aa).

A signal peptide spans 1 to 23; the sequence is MRFHTLLFLSFLLLVSCALICTA. Positions 24–48 are excised as a propeptide; sequence QHPGLKKSGMFHENVGKGQHIEKKR. 3 disulfide bridges follow: C50–C66, C57–C71, and C65–C81.

It belongs to the neurotoxin 07 (Beta/delta-agtx) family. 03 (aga-4) subfamily. JZTX sub-subfamily. In terms of tissue distribution, expressed by the venom gland.

Its subcellular location is the secreted. Its function is as follows. Inhibits TTX-sensitive sodium currents in rat dorsal root ganglion (DRG) neurons. The polypeptide is U25-theraphotoxin-Cg1a (Chilobrachys guangxiensis (Chinese earth tiger tarantula)).